The primary structure comprises 144 residues: ATP synthase epsilon chain (144 aa).

The protein belongs to the ATPase epsilon chain family. As to quaternary structure, F-type ATPases have 2 components, CF(1) - the catalytic core - and CF(0) - the membrane proton channel. CF(1) has five subunits: alpha(3), beta(3), gamma(1), delta(1), epsilon(1). CF(0) has three main subunits: a, b and c.

It localises to the cell inner membrane. Its function is as follows. Produces ATP from ADP in the presence of a proton gradient across the membrane. This is ATP synthase epsilon chain from Hydrogenovibrio crunogenus (strain DSM 25203 / XCL-2) (Thiomicrospira crunogena).